We begin with the raw amino-acid sequence, 1029 residues long: Cilia- and flagella-associated protein 91 (1029 aa).

Disordered regions lie at residues 72–97 (NYRP…GPNR) and 117–170 (PPSQ…PWEP). Residues 272-299 (LELLDNALQVREEELDDENRLRVEARKE) are a coiled coil. Over residues 837 to 854 (ENQDQQEPQPQPQPSSSS) the composition is skewed to low complexity. 2 disordered regions span residues 837 to 861 (ENQD…DLAD) and 876 to 1029 (GEPS…EAAE). Acidic residues predominate over residues 890 to 910 (QQLEADAEAEAEAEAEAEAGA). Low complexity predominate over residues 911–921 (EAEASAQAGAE). Acidic residues predominate over residues 922–932 (AEAEAGVEAEA). A compositionally biased stretch (low complexity) spans 933–944 (EASAGAEASVGA). Acidic residues predominate over residues 964–982 (PEAEAEAEAGAEAEAENGA). The segment covering 984 to 999 (AEARLGGEEEGFREGE) has biased composition (basic and acidic residues). Gly residues predominate over residues 1000 to 1015 (GQGGAAAGEAGPGGEL). Residues 1016–1029 (AEGEGEAGEGEAAE) are compositionally biased toward acidic residues.

This sequence belongs to the CFAP91 family. In terms of assembly, identified in a spoke-associated complex containing CFAP61, CFAP91 and CFAP251; the complex is associated with the radial spokes of the axoneme. The complex associates with Calmodulin; the association is calcium sensitive. Interacts with RSP3.

The protein localises to the cytoplasm. The protein resides in the cytoskeleton. It is found in the flagellum axoneme. Its function is as follows. As component of a spoke-associated complex, regulates flagellar dynein activity by mediating regulatory signals between the radial spokes and dynein arms. The chain is Cilia- and flagella-associated protein 91 from Chlamydomonas reinhardtii (Chlamydomonas smithii).